A 163-amino-acid polypeptide reads, in one-letter code: Large ribosomal subunit protein bL21 (163 aa).

Residues 124–163 are disordered; it reads KETTKKTKATVSIKKTAKKPSEKKSAPQKKAAVVSNNKED.

The protein belongs to the bacterial ribosomal protein bL21 family. Part of the 50S ribosomal subunit. Contacts protein L20.

Its function is as follows. This protein binds to 23S rRNA in the presence of protein L20. This is Large ribosomal subunit protein bL21 from Bartonella quintana (strain Toulouse) (Rochalimaea quintana).